The sequence spans 138 residues: DWGFLEKLLDQVQEHSTVVGKIWLTVLFIFRILILGLAGESVWGDEQSDFECNTAQPGCTNVCYDQAFPISHIPYWVLQFLFVSTPTLVYLGHVIYLSRREERLRQKEGELRALPDKDPRVERALAGIERQMAKISVA.

The Cytoplasmic portion of the chain corresponds to 1–16 (DWGFLEKLLDQVQEHS). A helical transmembrane segment spans residues 17–39 (TVVGKIWLTVLFIFRILILGLAG). The Extracellular portion of the chain corresponds to 40–74 (ESVWGDEQSDFECNTAQPGCTNVCYDQAFPISHIP). Residues 75 to 97 (YWVLQFLFVSTPTLVYLGHVIYL) form a helical membrane-spanning segment. Topologically, residues 98-138 (SRREERLRQKEGELRALPDKDPRVERALAGIERQMAKISVA) are cytoplasmic.

It belongs to the connexin family. Alpha-type (group II) subfamily. As to quaternary structure, a connexon is composed of a hexamer of connexins.

The protein localises to the cell membrane. The protein resides in the cell junction. It localises to the gap junction. Its function is as follows. One gap junction consists of a cluster of closely packed pairs of transmembrane channels, the connexons, through which materials of low MW diffuse from one cell to a neighboring cell. The sequence is that of Gap junction alpha-4 protein (GJA4) from Sus scrofa (Pig).